A 259-amino-acid chain; its full sequence is UPF0246 protein Rfer_2372 (259 aa).

It belongs to the UPF0246 family.

This is UPF0246 protein Rfer_2372 from Albidiferax ferrireducens (strain ATCC BAA-621 / DSM 15236 / T118) (Rhodoferax ferrireducens).